The chain runs to 293 residues: ATP phosphoribosyltransferase (293 aa).

The protein belongs to the ATP phosphoribosyltransferase family. Long subfamily. The cofactor is Mg(2+).

The protein localises to the cytoplasm. It carries out the reaction 1-(5-phospho-beta-D-ribosyl)-ATP + diphosphate = 5-phospho-alpha-D-ribose 1-diphosphate + ATP. It participates in amino-acid biosynthesis; L-histidine biosynthesis; L-histidine from 5-phospho-alpha-D-ribose 1-diphosphate: step 1/9. With respect to regulation, feedback inhibited by histidine. Catalyzes the condensation of ATP and 5-phosphoribose 1-diphosphate to form N'-(5'-phosphoribosyl)-ATP (PR-ATP). Has a crucial role in the pathway because the rate of histidine biosynthesis seems to be controlled primarily by regulation of HisG enzymatic activity. This is ATP phosphoribosyltransferase from Nitratidesulfovibrio vulgaris (strain ATCC 29579 / DSM 644 / CCUG 34227 / NCIMB 8303 / VKM B-1760 / Hildenborough) (Desulfovibrio vulgaris).